We begin with the raw amino-acid sequence, 1131 residues long: Activity-dependent neuroprotector homeobox protein 2 (1131 aa).

The C2H2-type 1 zinc-finger motif lies at 73 to 96 (YCCGLCKYSTKVLTSFKNHLHRYH). The segment at 106 to 128 (IPCPNCVFASQPKVVGRHFRMFH) adopts a C2H2-type 2; degenerate zinc-finger fold. Residues Lys-118 and Lys-146 each participate in a glycyl lysine isopeptide (Lys-Gly) (interchain with G-Cter in SUMO2) cross-link. The segment at 155–178 (FTCLKCNFSNTLYYSMKKHVLVAH) adopts a C2H2-type 3; degenerate zinc-finger fold. A C2H2-type 4 zinc finger spans residues 215 to 240 (YYCKKCNANASSQDALMYHILTSDIH). Positions 274–285 (LAAPANGSAPSA) are enriched in low complexity. A disordered region spans residues 274 to 329 (LAAPANGSAPSAPAQPPCFHLALPQNSPSPAAGQPVTVAQGAPGSLTHSPPAAGQS). A C2H2-type 5; degenerate zinc finger spans residues 694–716 (KTCPVCNELFPSNVYQVHMEVAH). A C2H2-type 6; degenerate zinc finger spans residues 747–768 (VRCLSCKCLVSEEELIHHLLMH). 2 C2H2-type zinc fingers span residues 770–793 (LGCL…RNRH) and 875–898 (STCP…KERH). Residues 913 to 937 (FKCIHCCGVYTGNMTLAAIAVHLVR) form a C2H2-type 9; degenerate zinc finger. Glycyl lysine isopeptide (Lys-Gly) (interchain with G-Cter in SUMO2) cross-links involve residues Lys-979 and Lys-1018. Ser-1024 carries the phosphoserine modification. Residue Lys-1032 forms a Glycyl lysine isopeptide (Lys-Gly) (interchain with G-Cter in SUMO1); alternate linkage. A Glycyl lysine isopeptide (Lys-Gly) (interchain with G-Cter in SUMO2); alternate cross-link involves residue Lys-1032. A DNA-binding region (homeobox) is located at residues 1043 to 1102 (PKKYEGRSYEEKKQFLKDYFHKKPYPSKKEIELLSSLFWVWKIDVASFFGKRRYICMKAI).

Belongs to the krueppel C2H2-type zinc-finger protein family. May interact with SMARCA4/BRG1.

It is found in the nucleus. Its function is as follows. May be involved in transcriptional regulation. May play a role in neuronal function; perhaps involved in protection of brain tissues from oxidative stress. May be involved in erythroid differentiation. The protein is Activity-dependent neuroprotector homeobox protein 2 (ADNP2) of Homo sapiens (Human).